Reading from the N-terminus, the 282-residue chain is Bifunctional protein FolD (282 aa).

Residues 165–167 (NRS), Ser-190, and Ile-231 contribute to the NADP(+) site.

Belongs to the tetrahydrofolate dehydrogenase/cyclohydrolase family. As to quaternary structure, homodimer.

The catalysed reaction is (6R)-5,10-methylene-5,6,7,8-tetrahydrofolate + NADP(+) = (6R)-5,10-methenyltetrahydrofolate + NADPH. It catalyses the reaction (6R)-5,10-methenyltetrahydrofolate + H2O = (6R)-10-formyltetrahydrofolate + H(+). It functions in the pathway one-carbon metabolism; tetrahydrofolate interconversion. In terms of biological role, catalyzes the oxidation of 5,10-methylenetetrahydrofolate to 5,10-methenyltetrahydrofolate and then the hydrolysis of 5,10-methenyltetrahydrofolate to 10-formyltetrahydrofolate. The polypeptide is Bifunctional protein FolD (Clostridium botulinum (strain ATCC 19397 / Type A)).